The chain runs to 326 residues: tRNA-modifying protein YgfZ (326 aa).

The folate site is built by Trp-27 and Trp-189.

The protein belongs to the tRNA-modifying YgfZ family.

The protein resides in the cytoplasm. Its function is as follows. Folate-binding protein involved in regulating the level of ATP-DnaA and in the modification of some tRNAs. It is probably a key factor in regulatory networks that act via tRNA modification, such as initiation of chromosomal replication. The protein is tRNA-modifying protein YgfZ of Salmonella arizonae (strain ATCC BAA-731 / CDC346-86 / RSK2980).